Reading from the N-terminus, the 312-residue chain is Non-structural protein 2 (312 aa).

ATP is bound by residues 107-109 (QVR), K185, and 218-220 (HGK). An RNA-binding region spans residues 202–238 (FAAYIRYNFNKFAAISHGKRHWRLVLHSQLMSHAERL). Residue H222 is the For NTPase and RTPase activities of the active site. R224 is an ATP binding site.

It belongs to the rotavirus NSP2 family. Homooctamer. Interacts with VP1; this interaction is weak. Interacts with NSP5; this interaction leads to up-regulation of NSP5 phosphorylation and formation of viral factories. Interacts with host DCP1A, DCP1B, DDX6, EDC4 and EIF2S1/eIF2-alpha; these interactions are probably part of the sequestration of some host SGs and PBs proteins in viral factories. The cofactor is Mg(2+).

It localises to the host cytoplasm. In terms of biological role, participates in replication and packaging of the viral genome. Plays a crucial role, together with NSP5, in the formation of virus factories (viroplasms), which are large inclusions in the host cytoplasm where replication intermediates are assembled and viral RNA replication takes place. Displays ssRNA binding, NTPase, RNA triphosphatase (RTPase) and ATP-independent helix-unwinding activities. The unwinding activity may prepare and organize plus-strand RNAs for packaging and replication by removing interfering secondary structures. The RTPase activity plays a role in the removal of the gamma-phosphate from the rotavirus RNA minus strands of dsRNA genome segments. Participates in the selective exclusion of host proteins from stress granules (SG) and P bodies (PB). Also participates in the sequestration of these remodeled organelles in viral factories. This Rotavirus C (isolate RVC/Human/United Kingdom/Bristol/1989) (RV-C) protein is Non-structural protein 2.